The primary structure comprises 140 residues: Putative peptidyl-tRNA hydrolase PTRHD1 (140 aa).

This sequence belongs to the PTH2 family. PTRHD1 subfamily.

The enzyme catalyses an N-acyl-L-alpha-aminoacyl-tRNA + H2O = an N-acyl-L-amino acid + a tRNA + H(+). In terms of biological role, as a putative peptidyl-tRNA hydrolase, it might be involved in releasing tRNAs from the ribosome during protein synthesis. Some evidence, however, suggests that it lacks peptidyl-tRNA hydrolase activity. The protein is Putative peptidyl-tRNA hydrolase PTRHD1 (Ptrhd1) of Mus musculus (Mouse).